The primary structure comprises 124 residues: Tax1-binding protein 3 homolog (124 aa).

One can recognise a PDZ domain in the interval 18–106 (AVELHKQEVI…DRAVKFIKQS (89 aa)).

In terms of biological role, may regulate a number of protein-protein interactions by competing for PDZ domain binding sites. This Caenorhabditis elegans protein is Tax1-binding protein 3 homolog.